Here is a 163-residue protein sequence, read N- to C-terminus: MMDKLQGWWRSISAREQRLVAVGGSCLLIGFCYWIVWQPIANRIAERERQVLSQQQTLAWLKEKGEEVLAMQGGQGRQIDTSGTLEGVVNRTAFNQKIKIARLQPQGQELQVWIDTVQFDDLLIWLASLADQHGVQVQVIEVARENLAPGLVKVRRLQLSRPQ.

Residues 1-19 (MMDKLQGWWRSISAREQRL) lie on the Cytoplasmic side of the membrane. The helical transmembrane segment at 20 to 40 (VAVGGSCLLIGFCYWIVWQPI) threads the bilayer. Over 41–163 (ANRIAERERQ…VRRLQLSRPQ (123 aa)) the chain is Periplasmic.

Belongs to the GSP M family. Type II secretion system is composed of four main components: the outer membrane complex, the inner membrane complex, the cytoplasmic secretion ATPase and the periplasm-spanning pseudopilus. Forms homodimers. Interacts with ExeL/GspL. Interacts with ExeE/GspE and ExeF/GspF.

The protein localises to the cell inner membrane. Functionally, inner membrane component of the type II secretion system required for the energy-dependent secretion of extracellular factors such as proteases and toxins from the periplasm. Plays a role in the complex assembly and recruits ExeL resulting in a stable complex in the inner membrane. Provides thus a link between the energy-providing ExeE protein in the cytoplasm and the rest of the T2SS machinery. The chain is Type II secretion system protein M (exeM) from Aeromonas hydrophila.